The following is a 362-amino-acid chain: Ferrochelatase (362 aa).

2 residues coordinate Fe cation: histidine 228 and glutamate 309.

It belongs to the ferrochelatase family.

It is found in the cytoplasm. It catalyses the reaction heme b + 2 H(+) = protoporphyrin IX + Fe(2+). Its pathway is porphyrin-containing compound metabolism; protoheme biosynthesis; protoheme from protoporphyrin-IX: step 1/1. In terms of biological role, catalyzes the ferrous insertion into protoporphyrin IX. The chain is Ferrochelatase from Bordetella bronchiseptica (strain ATCC BAA-588 / NCTC 13252 / RB50) (Alcaligenes bronchisepticus).